Here is a 130-residue protein sequence, read N- to C-terminus: Protein ApaG (130 aa).

Residues 3-127 (RAITRNIQVT…FSLDVPDVRR (125 aa)) enclose the ApaG domain.

This is Protein ApaG from Xanthobacter autotrophicus (strain ATCC BAA-1158 / Py2).